Consider the following 309-residue polypeptide: Tagatose-6-phosphate kinase (309 aa).

Belongs to the carbohydrate kinase PfkB family. LacC subfamily.

The enzyme catalyses D-tagatofuranose 6-phosphate + ATP = D-tagatofuranose 1,6-bisphosphate + ADP + H(+). Its pathway is carbohydrate metabolism; D-tagatose 6-phosphate degradation; D-glyceraldehyde 3-phosphate and glycerone phosphate from D-tagatose 6-phosphate: step 1/2. This is Tagatose-6-phosphate kinase from Streptococcus pneumoniae (strain Hungary19A-6).